A 255-amino-acid polypeptide reads, in one-letter code: Pyrroloquinoline-quinone synthase (255 aa).

Belongs to the PqqC family.

It catalyses the reaction 6-(2-amino-2-carboxyethyl)-7,8-dioxo-1,2,3,4,7,8-hexahydroquinoline-2,4-dicarboxylate + 3 O2 = pyrroloquinoline quinone + 2 H2O2 + 2 H2O + H(+). It functions in the pathway cofactor biosynthesis; pyrroloquinoline quinone biosynthesis. Functionally, ring cyclization and eight-electron oxidation of 3a-(2-amino-2-carboxyethyl)-4,5-dioxo-4,5,6,7,8,9-hexahydroquinoline-7,9-dicarboxylic-acid to PQQ. In Cereibacter sphaeroides (strain ATCC 17025 / ATH 2.4.3) (Rhodobacter sphaeroides), this protein is Pyrroloquinoline-quinone synthase.